The chain runs to 73 residues: Large ribosomal subunit protein uL24 (73 aa).

The segment covering 51–65 has biased composition (basic and acidic residues); that stretch reads DDNPKGGFIHKEKPM. Residues 51 to 73 are disordered; sequence DDNPKGGFIHKEKPMHISNVKKA.

The protein belongs to the universal ribosomal protein uL24 family. Part of the 50S ribosomal subunit.

Its function is as follows. One of two assembly initiator proteins, it binds directly to the 5'-end of the 23S rRNA, where it nucleates assembly of the 50S subunit. One of the proteins that surrounds the polypeptide exit tunnel on the outside of the subunit. The protein is Large ribosomal subunit protein uL24 of Helicobacter acinonychis (strain Sheeba).